The sequence spans 89 residues: Small ribosomal subunit protein uS15 (89 aa).

The protein belongs to the universal ribosomal protein uS15 family. As to quaternary structure, part of the 30S ribosomal subunit. Forms a bridge to the 50S subunit in the 70S ribosome, contacting the 23S rRNA.

In terms of biological role, one of the primary rRNA binding proteins, it binds directly to 16S rRNA where it helps nucleate assembly of the platform of the 30S subunit by binding and bridging several RNA helices of the 16S rRNA. Functionally, forms an intersubunit bridge (bridge B4) with the 23S rRNA of the 50S subunit in the ribosome. This is Small ribosomal subunit protein uS15 from Saccharopolyspora erythraea (strain ATCC 11635 / DSM 40517 / JCM 4748 / NBRC 13426 / NCIMB 8594 / NRRL 2338).